The chain runs to 588 residues: Aspartate--tRNA ligase (588 aa).

Residue Glu177 participates in L-aspartate binding. The aspartate stretch occupies residues 201–204 (QLFK). Arg223 contacts L-aspartate. ATP is bound by residues 223–225 (RDE) and Gln232. Position 451 (His451) interacts with L-aspartate. Residue Glu485 participates in ATP binding. An L-aspartate-binding site is contributed by Arg492. Residue 537 to 540 (GLDR) participates in ATP binding.

This sequence belongs to the class-II aminoacyl-tRNA synthetase family. Type 1 subfamily. As to quaternary structure, homodimer.

It is found in the cytoplasm. It carries out the reaction tRNA(Asp) + L-aspartate + ATP = L-aspartyl-tRNA(Asp) + AMP + diphosphate. Its function is as follows. Catalyzes the attachment of L-aspartate to tRNA(Asp) in a two-step reaction: L-aspartate is first activated by ATP to form Asp-AMP and then transferred to the acceptor end of tRNA(Asp). In Staphylococcus haemolyticus (strain JCSC1435), this protein is Aspartate--tRNA ligase.